The sequence spans 283 residues: Acyl-coenzyme A diphosphatase FITM2 (283 aa).

Residues 1–11 (MSTRRSSTRAD) show a composition bias toward low complexity. Residues 1–21 (MSTRRSSTRADSTTKRPASPN) are disordered. Residues 1–39 (MSTRRSSTRADSTTKRPASPNSTPNAALGIFVAIARQIL) are Cytoplasmic-facing. Residues 40 to 60 (FIDARKVALFYLAFVTVLSFI) traverse the membrane as a helical segment. The Lumenal segment spans residues 61–81 (ESRIELDSTYYLVQKHSVLNQ). A helical transmembrane segment spans residues 82-102 (YGVKMGWFWTLVIVGPFIWFS). At 103–120 (SKAHNRRDRDQPIVDVCR) the chain is on the cytoplasmic side. A helical transmembrane segment spans residues 121-141 (LGVGTACWYFSVQFFHKVLAL). Residues 142 to 168 (TSMCDKGRTLTRAQCSEKEGVWTPGYD) lie on the Lumenal side of the membrane. A helical transmembrane segment spans residues 169 to 189 (ISGHCFLMIYSILIITEEAIA). Residue H172 is part of the active site. Residues 190–219 (YRHYQQVTDAVHQMDGDREEHDRLTRCIQY) are Cytoplasmic-facing. Transmembrane regions (helical) follow at residues 220-240 (FFVAMLFLHAFWFKQIIISVL) and 241-261 (YYHIFIEEILGAVAAVVCWFV). H243 is an active-site residue. At 262-283 (TYRMLYPAGFLASPIRRTVGRK) the chain is on the cytoplasmic side.

It belongs to the FIT family. FIT2 subfamily.

It localises to the endoplasmic reticulum membrane. It carries out the reaction an acyl-CoA + H2O = an acyl-4'-phosphopantetheine + adenosine 3',5'-bisphosphate + 2 H(+). Fatty acyl-coenzyme A (CoA) diphosphatase that hydrolyzes fatty acyl-CoA to yield acyl-4'-phosphopantetheine and adenosine 3',5'-bisphosphate. Preferentially hydrolyzes unsaturated long-chain acyl-CoA substrates in the endoplasmic reticulum (ER) lumen. This catalytic activity is required for maintaining ER structure and for lipid droplets (LDs) biogenesis, which are lipid storage organelles involved in maintaining lipid and energy homeostasis. May directly bind to diacylglycerol (DAGs) and triacylglycerol, which is also important for LD biogenesis. May support directional budding of nacent LDs from the ER into the cytosol by reducing DAG levels at sites of LD formation. May play a role in the regulation of cell morphology, ER morphology and cytoskeletal organization. The polypeptide is Acyl-coenzyme A diphosphatase FITM2 (Caenorhabditis elegans).